Reading from the N-terminus, the 20-residue chain is Equinatoxin-3 (20 aa).

Residues 3–12 (AVAGAIIKGA) are plays an important role in the hemolytic activity. Positions 11-20 (GAALTFNVLQ) are N-terminal region.

Belongs to the actinoporin family. Sea anemone subfamily. As to quaternary structure, octamer or nonamer in membranes. Monomer in the soluble state.

The protein resides in the secreted. It localises to the nematocyst. Its subcellular location is the target cell membrane. Pore-forming protein that forms cations-selective hydrophilic pores of around 1 nm and causes cardiac stimulation and cytolysis. Pore formation is a multi-step process that involves specific recognition of membrane sphingomyelin (but neither cholesterol nor phosphatidylcholine) using aromatic rich region and adjacent phosphocholine (POC) binding site, firm binding to the membrane (mainly driven by hydrophobic interactions) accompanied by the transfer of the N-terminal region to the lipid-water interface and finally pore formation after oligomerization of monomers. Cytolytic effects include red blood cells hemolysis, platelet aggregation and lysis, cytotoxic and cytostatic effects on fibroblasts. Lethality in mammals has been ascribed to severe vasospasm of coronary vessels, cardiac arrhythmia, and inotropic effects. The chain is Equinatoxin-3 from Actinia equina (Beadlet anemone).